A 603-amino-acid chain; its full sequence is Sesquiterpene synthase Cad (603 aa).

Residues M1 to S13 are compositionally biased toward polar residues. Residues M1–Q23 form a disordered region. Residues D357, D361, D498, and E506 each contribute to the Mg(2+) site. A DDXXD motif motif is present at residues D357–D361.

Belongs to the terpene synthase family. Tpsa subfamily. Mg(2+) is required as a cofactor. The cofactor is Mn(2+). Mostly expressed in leaves and, to a lower extent, in stems and xylem.

The enzyme catalyses (2E,6E)-farnesyl diphosphate = beta-cadinene + diphosphate. The protein operates within secondary metabolite biosynthesis; terpenoid biosynthesis. Its function is as follows. Sesquiterpene synthase involved in the biosynthesis of volatile compounds. Mediates the conversion of (2E,6E)-farnesyl diphosphate (FPP) into beta-cadinene. Not active with geranyl diphosphate (GPP) and geranylgeranyl diphosphate (GGPP) as substrates. The protein is Sesquiterpene synthase Cad of Chamaecyparis formosensis (Formosan cypress).